Here is a 181-residue protein sequence, read N- to C-terminus: ATP synthase subunit delta (181 aa).

It belongs to the ATPase delta chain family. In terms of assembly, F-type ATPases have 2 components, F(1) - the catalytic core - and F(0) - the membrane proton channel. F(1) has five subunits: alpha(3), beta(3), gamma(1), delta(1), epsilon(1). F(0) has three main subunits: a(1), b(2) and c(10-14). The alpha and beta chains form an alternating ring which encloses part of the gamma chain. F(1) is attached to F(0) by a central stalk formed by the gamma and epsilon chains, while a peripheral stalk is formed by the delta and b chains.

It is found in the cell inner membrane. Functionally, f(1)F(0) ATP synthase produces ATP from ADP in the presence of a proton or sodium gradient. F-type ATPases consist of two structural domains, F(1) containing the extramembraneous catalytic core and F(0) containing the membrane proton channel, linked together by a central stalk and a peripheral stalk. During catalysis, ATP synthesis in the catalytic domain of F(1) is coupled via a rotary mechanism of the central stalk subunits to proton translocation. In terms of biological role, this protein is part of the stalk that links CF(0) to CF(1). It either transmits conformational changes from CF(0) to CF(1) or is implicated in proton conduction. The sequence is that of ATP synthase subunit delta from Aquifex aeolicus (strain VF5).